The sequence spans 266 residues: Putative carbamate hydrolase RutD (266 aa).

Residues Pro14 to Leu115 enclose the AB hydrolase-1 domain.

The protein belongs to the AB hydrolase superfamily. Hydrolase RutD family.

It carries out the reaction carbamate + 2 H(+) = NH4(+) + CO2. Its function is as follows. Involved in pyrimidine catabolism. May facilitate the hydrolysis of carbamate, a reaction that can also occur spontaneously. The sequence is that of Putative carbamate hydrolase RutD from Shigella flexneri serotype X (strain 2002017).